The following is a 101-amino-acid chain: Putative pterin-4-alpha-carbinolamine dehydratase (101 aa).

This sequence belongs to the pterin-4-alpha-carbinolamine dehydratase family.

The catalysed reaction is (4aS,6R)-4a-hydroxy-L-erythro-5,6,7,8-tetrahydrobiopterin = (6R)-L-erythro-6,7-dihydrobiopterin + H2O. This Rhizobium rhizogenes (strain K84 / ATCC BAA-868) (Agrobacterium radiobacter) protein is Putative pterin-4-alpha-carbinolamine dehydratase.